The chain runs to 1166 residues: MPGITETSQVTGPVLAHVIVTEDPYDASERAFLSTDLYELLFEDYANGSKSGLTLISIQLMGSSLFNEFQTFKVYESEEQLPPNTVNLCNMGNIIDYSSDFTVDSGYVARVDSLVKLDTVIISVLPEVYSLASQASQHQLVDILGGNDQHTVIRQGDYNKDINGKISLCEPTDQGFLESTTKIIVVKENSLNLPLLDQSQDGSLNYEENVKMNLEHSISNYFSLNSLDPENQITTTGVEFSVKCLDSPISVRKTAKSISVAHDSEDESSPKLVEEDISNEDTLLYAFCKTTELAKIGCLSGDIVKMKSGQCQCTTFECNCESCPVQYRYIRIHAFTDPNTYEKGCIYLNPILSFNLNNPKIVKLCPISIPDKRFELQGFHFSKFIPLAKQVTIARVSSPVTLDRTLQTLFLTNLKTYFESGRKVLSKDQLIPIPVDTLLAKSIFSTYEKLGVDDSQFPTVIPEGKPDAIAWFKVTEVSGELADSASQQFIIDPLKTKMMQSGVVSCSPPKNSQHCNWANYLGCGQMFSFPNVSGVTTSTFEYAKTLRKLIKATIDPSRLVNLQTTVLLSSLSRAIGKSLLVHSLALECGVHLVEIDGYEVLNPSSESKTIGTIRGKLDRVVEGCTPLIVFIKHIEALTKKSEQQQKDSLAVKINELIDEYTAKPGVLFVASTNDSDNLSDELRAKFKFEIVLGVPSEQERTLIFKYLIDFDQKTTPKVTEGTRELSFAPRNDLSLSSLSLQSAGLTPRDLISIVENAKTLAVDRVESLAKHHNVSFENMVYSSGGYIKFTPEDVEKSINTARNKFSDSIGAPRIPNVKWEDVGGLDVVKDEILDTIDMPMKHPELFSNGIKKRSGILFYGPPGTGKTLLAKAIATNFALNFFSVKGPELLNMYIGESEANVRKVFQRARDAKPCVVFFDELDSVAPKRGNQGDSGGVMDRIVSQLLAELDGMSGGDGGDGVFVVGATNRPDLLDEALLRPGRFDKMLYLGVSDTHEKQSKIMEALSRKFHLHPSVDLDKVAESCPFTFTGADFYALCSDAMLNAMTRIANTVDEKIKRYNEELPEKSQVSTRWWFDNVATKEDIDVLVTLEDFDKSRKELVPSVSAEELDHYLRVRQNFEGGKEKKVVQENGQTEHFSNGSANNHITFGDEQVVEAIDENGNSIIA.

This sequence belongs to the AAA ATPase family. As to quaternary structure, interacts with PEX1; forming the PEX1-PEX6 AAA ATPase complex, which is composed of a heterohexamer formed by a trimer of PEX1-PEX6 dimers.

It is found in the membrane. It carries out the reaction ATP + H2O = ADP + phosphate + H(+). Functionally, component of the PEX1-PEX6 AAA ATPase complex involved in peroxisome biosynthesis. The complex acts as a protein dislocase complex that mediates the ATP-dependent extraction of the PEX5 receptor from peroxisomal membranes, an essential step for PEX5 recycling. Specifically recognizes PEX5 monoubiquitinated at 'Cys-6', and pulls it out of the peroxisome lumen through the PEX2-PEX10-PEX12 retrotranslocation channel. Extraction by the PEX1-PEX6 AAA ATPase complex is accompanied by unfolding of the TPR repeats and release of bound cargo from PEX5. The sequence is that of Peroxisomal ATPase PEX6 from Komagataella phaffii (strain GS115 / ATCC 20864) (Yeast).